The following is a 3470-amino-acid chain: Mucin-4 (3470 aa).

The N-terminal stretch at 1–28 (MRGPHWRVPWLCLSCLYSCLLLLPDALA) is a signal peptide. The segment at 32-163 (TQTPMSLSSS…STESTSVDSG (132 aa)) is disordered. Low complexity predominate over residues 37-57 (SLSSSTRTSQMSSQASTSSTS). O-linked (GalNAc...) threonine glycosylation is found at Thr42, Thr44, Thr65, Thr68, Thr87, Thr91, Thr96, Thr97, Thr98, Thr99, Thr100, Thr103, Thr104, Thr106, Thr117, Thr130, Thr131, Thr132, Thr145, Thr146, Thr150, Thr151, Thr152, and Thr155. The tract at residues 43–2501 (RTSQMSSQAS…ETLINDFTSS (2459 aa)) is variable number of tandem repeats (VNTR). The segment covering 66–85 (EQTSTRDTPSSITTVSQSHH) has biased composition (polar residues). Residues 86–111 (TTSMETSKPQTTTTTEVTTSTPSASS) show a composition bias toward low complexity. Residues 112–129 (RDQIQTETSSQRTISPDG) are compositionally biased toward polar residues. Over residues 130-162 (TTTSHAPSISSSAPSTTHMLTTTSSTESTSVDS) the composition is skewed to low complexity. Asn188 carries N-linked (GlcNAc...) asparagine glycosylation. The span at 199 to 220 (TLTQRQHTGSKQTSSKSQVNIV) shows a compositional bias: polar residues. Disordered stretches follow at residues 199–679 (TLTQ…STVS), 691–925 (FPQS…NMST), 938–1219 (TLPQ…MSTV), 1232–1400 (LPQS…MSTV), 1413–1524 (LPQS…MSTV), 1537–1647 (LPKS…NMST), and 1660–1992 (TLPQ…TEIT). The span at 221–232 (TSTLSTSTSDST) shows a compositional bias: low complexity. The segment covering 233–243 (PAQTMSQVTSS) has biased composition (polar residues). O-linked (GalNAc...) threonine glycosylation is found at Thr236 and Thr241. Positions 251–272 (STSGVSSTSLTTTEVLTQTSST) are enriched in low complexity. Residues 273-283 (DSAPGNTTLRI) show a composition bias toward polar residues. Residues Asn278 and Asn286 are each glycosylated (N-linked (GlcNAc...) asparagine). Low complexity predominate over residues 284 to 299 (TQNSTTHTTKVSTTST). O-linked (GalNAc...) threonine glycosylation is present at Thr297. A compositionally biased stretch (polar residues) spans 300 to 335 (PQKLSPVSTLINSSQKMSTLPQNQHTESMDTSRQPQ). Asn311 carries N-linked (GlcNAc...) asparagine glycosylation. The segment covering 336–346 (TTTTIEVTTST) has biased composition (low complexity). Residues 347–448 (PSASSLHQIQ…LTSSYSQHIQ (102 aa)) show a composition bias toward polar residues. Thr357, Thr370, Thr371, Thr372, Thr385, and Thr423 each carry an O-linked (GalNAc...) threonine glycan. Residues 449 to 470 (SKGTSSKSQTTTNTKVNTSTPS) are compositionally biased toward low complexity. N-linked (GlcNAc...) asparagine glycosylation occurs at Asn465. The segment covering 479 to 489 (TETSSQRTNSP) has biased composition (polar residues). Thr494 carries O-linked (GalNAc...) threonine glycosylation. A compositionally biased stretch (low complexity) spans 496-510 (HAPSMSSSAPSTTHM). The span at 511-577 (LSTTSSNQST…SQSQHTGSKG (67 aa)) shows a compositional bias: polar residues. Residue Thr513 is glycosylated (O-linked (GalNAc...) threonine). A glycan (N-linked (GlcNAc...) asparagine) is linked at Asn517. 2 O-linked (GalNAc...) threonine glycosylation sites follow: Thr542 and Thr545. Asn550 carries N-linked (GlcNAc...) asparagine glycosylation. O-linked (GalNAc...) threonine glycosylation is found at Thr551, Thr584, Thr585, Thr586, Thr587, Thr588, Thr592, Thr594, Thr599, Thr605, Thr618, Thr619, Thr620, Thr633, Thr634, Thr639, Thr640, and Thr655. Over residues 578–599 (TSSNPQTTTTTEVTTSTPSATT) the composition is skewed to low complexity. The span at 600-631 (HDQIQTETSSQNTISPGETTTSYAPIMSSSAP) shows a compositional bias: polar residues. The segment covering 632 to 647 (STTHMLSTTSSTQSTS) has biased composition (low complexity). 2 stretches are compositionally biased toward polar residues: residues 653-679 (TTTLTNQGSTPATTQVSPSSQNMSTVS) and 691-701 (FPQSQHTGSKG). An N-linked (GlcNAc...) asparagine glycan is attached at Asn674. Thr702, Thr708, Thr709, Thr710, Thr711, and Thr716 each carry an O-linked (GalNAc...) threonine glycan. Positions 702 to 723 (TSSNPQTTTTPVVTTSNPSATS) are enriched in low complexity. The N-linked (GlcNAc...) asparagine glycan is linked to Asn718. The span at 724–741 (RDQIQTETSSQRTISPGE) shows a compositional bias: polar residues. Positions 742–772 (TTTSYASIMSSSAPSTTHMLTTTSSTQSTSV) are enriched in low complexity. O-linked (GalNAc...) threonine glycosylation is found at Thr743, Thr744, Thr757, and Thr758. Over residues 780–824 (VRTQGSTPATTQVSPSSQNMSTVSTPITSTQILSTLPQSQHTGSK) the composition is skewed to polar residues. Asn798 is a glycosylation site (N-linked (GlcNAc...) asparagine). Residues 825–848 (GTSSNPQTTTSPVVTTSTPSGTSG) show a composition bias toward low complexity. 9 O-linked (GalNAc...) threonine glycosylation sites follow: Thr826, Thr832, Thr833, Thr834, Thr839, Thr840, Thr842, Thr846, and Thr853. The span at 849 to 879 (DQIQTETSSQRTISPGKTTTSHALNINSSAP) shows a compositional bias: polar residues. N-linked (GlcNAc...) asparagine glycosylation occurs at Asn875. Residues 880-895 (STTHMLSTTSSTQSTS) are compositionally biased toward low complexity. O-linked (GalNAc...) threonine glycosylation is found at Thr901 and Thr902. The span at 901–925 (TTAGRTQGSTPATTQVSPSSQNMST) shows a compositional bias: polar residues. A glycan (N-linked (GlcNAc...) asparagine) is linked at Asn922. A compositionally biased stretch (low complexity) spans 948-968 (KSTSTNPQTTTTPEVTTSNPS). O-linked (GalNAc...) threonine glycans are attached at residues Thr950, Thr952, Thr956, Thr957, Thr958, Thr959, Thr963, and Thr964. A glycan (N-linked (GlcNAc...) asparagine) is linked at Asn966. Polar residues predominate over residues 969–1003 (ATSHDQIETETSSQRTISPGETTTSYAPIMSSSAP). Thr990, Thr991, Thr992, Thr1005, Thr1006, Thr1011, Thr1012, and Thr1015 each carry an O-linked (GalNAc...) threonine glycan. The span at 1004–1019 (STTHMLSTTSSTQSTS) shows a compositional bias: low complexity. A compositionally biased stretch (polar residues) spans 1020-1065 (VDTRNTTTLTTQGSTPATTQVSPSSKNMSTVSTPITSTHKLSTLPQ). Asn1024 carries an N-linked (GlcNAc...) asparagine glycan. O-linked (GalNAc...) threonine glycans are attached at residues Thr1025, Thr1026, Thr1027, Thr1029, and Thr1038. N-linked (GlcNAc...) asparagine glycosylation is found at Asn1046, Asn1072, and Asn1091. Low complexity predominate over residues 1066-1083 (SQHTGSNGTSSSSSTPAT). Polar residues predominate over residues 1091–1120 (NMSTVSTPITTTHKLSTLSQSQHTGSKGTS). The segment covering 1121-1140 (SNPQTTTTPVMTTSTPSATT) has biased composition (low complexity). Thr1125, Thr1126, Thr1127, Thr1128, Thr1132, Thr1133, Thr1135, Thr1140, Thr1174, Thr1198, and Thr1207 each carry an O-linked (GalNAc...) threonine glycan. 2 stretches are compositionally biased toward polar residues: residues 1141–1219 (HDQI…MSTV) and 1232–1242 (LPQSQHTGSKG). A glycan (N-linked (GlcNAc...) asparagine) is linked at Asn1215. 20 O-linked (GalNAc...) threonine glycosylation sites follow: Thr1243, Thr1245, Thr1249, Thr1250, Thr1251, Thr1252, Thr1256, Thr1257, Thr1259, Thr1263, Thr1270, Thr1283, Thr1284, Thr1285, Thr1298, Thr1299, Thr1304, Thr1305, Thr1318, and Thr1319. Over residues 1243–1264 (TSTNPQTTTTPEVTTSTPSATS) the composition is skewed to low complexity. The segment covering 1265–1296 (RDQIQTETSSQRTISPGETTTSHAPIMSSSAP) has biased composition (polar residues). The span at 1297 to 1312 (STTHMLSTTSSTQSTS) shows a compositional bias: low complexity. Residues 1318–1353 (TTAGRTQGSTPATTQVSPSSQNMTTTSHALMSSSAP) show a composition bias toward polar residues. The N-linked (GlcNAc...) asparagine glycan is linked to Asn1339. O-linked (GalNAc...) threonine glycans are attached at residues Thr1341, Thr1342, Thr1355, Thr1356, Thr1365, Thr1368, Thr1372, Thr1375, Thr1376, Thr1377, and Thr1379. Low complexity predominate over residues 1354–1390 (STTHMLSTTSSTQSTSVDTRHTTTVTTQGSTPATTQV). Polar residues-rich tracts occupy residues 1391-1400 (LPSSQNMSTV) and 1413-1477 (LPQS…SSAP). N-linked (GlcNAc...) asparagine glycosylation occurs at Asn1396. O-linked (GalNAc...) threonine glycosylation is found at Thr1426, Thr1430, Thr1431, Thr1440, Thr1451, Thr1453, Thr1464, Thr1465, and Thr1466. Asn1471 is a glycosylation site (N-linked (GlcNAc...) asparagine). Over residues 1478–1489 (STTHMLSSTSST) the composition is skewed to low complexity. Thr1479, Thr1480, Thr1499, and Thr1512 each carry an O-linked (GalNAc...) threonine glycan. Polar residues-rich tracts occupy residues 1490–1524 (QITSVDTGHTSAGRTQGSTPATTQVSPSSQNMSTV) and 1537–1553 (LPKSQHTGSKGTSSNPQ). Asn1520 carries an N-linked (GlcNAc...) asparagine glycan. Thr1554, Thr1555, Thr1557, and Thr1562 each carry an O-linked (GalNAc...) threonine glycan. A compositionally biased stretch (low complexity) spans 1554–1569 (TTITPVVTTSTPSASS). Polar residues predominate over residues 1570–1587 (RDQIQTETSFQRTISPGE). Residues Thr1588, Thr1589, Thr1590, Thr1604, Thr1609, Thr1627, Thr1635, and Thr1636 are each glycosylated (O-linked (GalNAc...) threonine). Low complexity predominate over residues 1588–1609 (TTTSHAPSMSSSAPSSTHMLST). Residues 1610–1647 (ASSTQITSVDTRHTTAITTQGSTPATTQVSPSSQNMST) show a composition bias toward polar residues. N-linked (GlcNAc...) asparagine glycosylation occurs at Asn1644. Positions 1670 to 1693 (KSTSTNPQTTTTPRVTTSTPSASS) are enriched in low complexity. 11 O-linked (GalNAc...) threonine glycosylation sites follow: Thr1672, Thr1674, Thr1678, Thr1679, Thr1680, Thr1681, Thr1685, Thr1686, Thr1688, Thr1699, and Thr1714. The segment covering 1694–1725 (RDQIQTETSSQRTISPGKTTTSHVPNMNSSAP) has biased composition (polar residues). The N-linked (GlcNAc...) asparagine glycan is linked to Asn1721. Over residues 1726 to 1742 (STTHILSTTSSIQSTSG) the composition is skewed to low complexity. The span at 1747 to 1837 (TTAVRTQGST…SSQRTISPGE (91 aa)) shows a compositional bias: polar residues. N-linked (GlcNAc...) asparagine glycosylation is present at Asn1770. Thr1838, Thr1839, Thr1840, Thr1854, Thr1873, Thr1874, Thr1888, Thr1889, and Thr1891 each carry an O-linked (GalNAc...) threonine glycan. Residues 1838–1859 (TTTSHASSLSSSAPSSTHMLST) show a composition bias toward low complexity. A compositionally biased stretch (polar residues) spans 1860-1877 (ASSTEITSGDTRHTTAIV). A compositionally biased stretch (low complexity) spans 1878 to 1895 (TQGSTPATTQTTLTPSSQ). An N-linked (GlcNAc...) asparagine glycan is attached at Asn1896. Residues 1896–1927 (NMSTVSTPITSTHKLSPLPQSQHTENMGTSSN) show a composition bias toward polar residues. Residues 1928–1945 (PQTTTTPEVTTSTPSATS) are compositionally biased toward low complexity. O-linked (GalNAc...) threonine glycans are attached at residues Thr1930, Thr1931, Thr1932, Thr1933, Thr1937, Thr1938, Thr1940, Thr1964, Thr1965, Thr1966, and Thr1980. Positions 1946–1992 (YDQIQTETSFQRTISPGETTTSHAPSMSNSAPSSTHKLSTASSTEIT) are enriched in polar residues. Asn2022 carries an N-linked (GlcNAc...) asparagine glycan. The span at 2037 to 2055 (STLRQSQHTGSKGTSSNHQ) shows a compositional bias: polar residues. Disordered regions lie at residues 2037 to 2107 (STLR…NTTH), 2139 to 2185 (QVSL…NITP), 2205 to 2237 (TMSWGTSSSGTINTLSTPVRNTSPASTSGILTS), and 2262 to 2368 (TSTS…TVPL). Residues Thr2056 and Thr2057 are each glycosylated (O-linked (GalNAc...) threonine). The span at 2056-2071 (TTTTPVVTTSTSSATS) shows a compositional bias: low complexity. Polar residues predominate over residues 2072–2089 (RDQIQTETSSLRTISPDG). Residues Thr2090, Thr2091, and Thr2092 are each glycosylated (O-linked (GalNAc...) threonine). A compositionally biased stretch (low complexity) spans 2090-2107 (TTTSHASSMSSSSPNTTH). An N-linked (GlcNAc...) asparagine glycan is attached at Asn2104. O-linked (GalNAc...) threonine glycans are attached at residues Thr2105 and Thr2106. N-linked (GlcNAc...) asparagine glycans are attached at residues Asn2148, Asn2182, and Asn2225. Composition is skewed to polar residues over residues 2205-2229 (TMSWGTSSSGTINTLSTPVRNTSPA) and 2262-2303 (TSTS…QTSI). Residues Thr2264, Thr2352, Thr2354, Thr2359, and Thr2360 are each glycosylated (O-linked (GalNAc...) threonine). Residues 2344–2367 (TAVSATSSTLTSPSPTTASRSTVP) show a composition bias toward low complexity. Residues 2458 to 2613 (PFWADADFSS…GLQVYRLHRE (156 aa)) form the NIDO domain. The 113-residue stretch at 2614-2726 (ERPNYRLKCL…SFCVWYQLRR (113 aa)) folds into the AMOP domain. In terms of domain architecture, VWFD spans 2738 to 2937 (RPAWTFGDPH…TWHVNGTGLL (200 aa)). 20 N-linked (GlcNAc...) asparagine glycosylation sites follow: Asn2755, Asn2773, Asn2801, Asn2827, Asn2844, Asn2853, Asn2888, Asn2909, Asn2916, Asn2932, Asn2958, Asn2985, Asn3003, Asn3014, Asn3054, Asn3079, Asn3102, Asn3109, Asn3157, and Asn3174. Residues 3173–3212 (PNRSCPMNYCYNNGHCDISEAPGCQPTCTCPPAFTDNRCF) enclose the EGF-like 1 domain. Cystine bridges form between Cys3177/Cys3188, Cys3182/Cys3200, and Cys3202/Cys3211. Residues Asn3240, Asn3247, and Asn3353 are each glycosylated (N-linked (GlcNAc...) asparagine). Positions 3382–3421 (VSPCSEGYCHNGGQCKHLPDGPQCSCASFTIYSSSGEHCE) constitute an EGF-like 2 domain. Disulfide bonds link Cys3385–Cys3396, Cys3390–Cys3405, and Cys3407–Cys3420. Residues 3432–3452 (GILFGTLGALLLLGILAFMIF) form a helical membrane-spanning segment.

As to quaternary structure, a heterodimeric complex, composed of a mucin-4 alpha chain and a cysteine-rich transmembrane mucin-4 beta chain. Mucin-4 beta chain interacts with ERBB2 via the EGF-like domain 1. In nonpolarized cells, associates with ERBB2 and ERBB3. Post-translationally, proteolytically cleaved into 2 chains, mucin-4 alpha chain and mucin-4 beta chain. In terms of processing, highly O-glycosylated. Predominantly N-glycosylated. In terms of tissue distribution, expressed in trachea, duodenum and intestine. Lower expression in stomach, salivary glands, liver, gallbladder, and kidney.

It localises to the cell membrane. The protein resides in the secreted. Functionally, membrane-bound mucin, a family of highly glycosylated proteins that constitute the major component of the mucus, the slimy and viscous secretion covering epithelial surfaces. These glycoproteins play important roles in the protection of the epithelium and are implicated in epithelial renewal and differentiation. Regulates cellular behavior through both anti-adhesive effects on cell-cell and cell-extracellular matrix interactions and its ability to act as an intramembrane ligand for ERBB2. Plays an important role in proliferation and differentiation of epithelial cells by inducing specific phosphorylation of ERBB2. In polarized epithelial cells, segregates ERBB2 and other ERBB receptors and prevents ERBB2 from acting as a coreceptor. The interaction with ERBB2 leads to enhanced expression of CDKN1B. The formation of a MUC4-ERBB2-ERBB3-NRG1 complex leads to down-regulation of CDKN1B, resulting in repression of apoptosis and stimulation of proliferation. Its ability to promote tumor growth may be mainly due to repression of apoptosis as opposed to proliferation. This chain is Mucin-4 (Muc4), found in Mus musculus (Mouse).